The sequence spans 180 residues: Dual-action ribosomal maturation protein DarP (180 aa).

Over residues 1 to 13 (MKPDKTENTEHGI) the composition is skewed to basic and acidic residues. The tract at residues 1–21 (MKPDKTENTEHGIEPVSKTKR) is disordered.

This sequence belongs to the DarP family.

It is found in the cytoplasm. Member of a network of 50S ribosomal subunit biogenesis factors which assembles along the 30S-50S interface, preventing incorrect 23S rRNA structures from forming. Promotes peptidyl transferase center (PTC) maturation. The chain is Dual-action ribosomal maturation protein DarP from Methylobacillus flagellatus (strain ATCC 51484 / DSM 6875 / VKM B-1610 / KT).